Here is a 239-residue protein sequence, read N- to C-terminus: Ribonuclease PH (239 aa).

Phosphate contacts are provided by residues arginine 86 and 124 to 126; that span reads GTR.

It belongs to the RNase PH family. Homohexameric ring arranged as a trimer of dimers.

It carries out the reaction tRNA(n+1) + phosphate = tRNA(n) + a ribonucleoside 5'-diphosphate. In terms of biological role, phosphorolytic 3'-5' exoribonuclease that plays an important role in tRNA 3'-end maturation. Removes nucleotide residues following the 3'-CCA terminus of tRNAs; can also add nucleotides to the ends of RNA molecules by using nucleoside diphosphates as substrates, but this may not be physiologically important. Probably plays a role in initiation of 16S rRNA degradation (leading to ribosome degradation) during starvation. The protein is Ribonuclease PH of Rickettsia bellii (strain OSU 85-389).